The chain runs to 254 residues: Ribosomal RNA small subunit methyltransferase J (254 aa).

S-adenosyl-L-methionine-binding positions include 107–108 (RD), 123–124 (ER), and D177.

The protein belongs to the methyltransferase superfamily. RsmJ family.

It localises to the cytoplasm. The enzyme catalyses guanosine(1516) in 16S rRNA + S-adenosyl-L-methionine = N(2)-methylguanosine(1516) in 16S rRNA + S-adenosyl-L-homocysteine + H(+). Functionally, specifically methylates the guanosine in position 1516 of 16S rRNA. In Histophilus somni (strain 129Pt) (Haemophilus somnus), this protein is Ribosomal RNA small subunit methyltransferase J.